Reading from the N-terminus, the 166-residue chain is MSDLRRKGWWNVPDYFHSPLVFDMEEDKEDYIFGPHDEYLHTLEVHSNTLIQLERWFTPTGQTRVTVVGPLKARLWVMDMIRKVGSKNNLDQIKGKMMLLQIRDHPLRDRDLELHPESGSSLWITTMNDTTFVEVPHFLRFPLTVAWLFCGFVRILGIHNFADLHW.

In terms of domain architecture, KH; atypical spans 19–78 (PLVFDMEEDKEDYIFGPHDEYLHTLEVHSNTLIQLERWFTPTGQTRVTVVGPLKARLWVM).

Belongs to the KHDC1 family.

The protein localises to the cytoplasm. In terms of biological role, has pro-apoptotic activity. In Mus musculus (Mouse), this protein is KH homology domain-containing protein 1A (Khdc1a).